We begin with the raw amino-acid sequence, 387 residues long: TPR repeat-containing protein SYNPCC7002_A0425 (387 aa).

9 TPR repeats span residues 63-96 (LNAL…EANN), 97-130 (ARIH…EDDN), 132-164 (EFFN…QPNN), 166-198 (AYSL…DSNN), 200-232 (MALQ…RPND), 233-266 (AELR…STRD), 267-300 (SAMQ…DPQS), 302-334 (EAFA…SPTD), and 336-368 (AAFY…YQQR).

This chain is TPR repeat-containing protein SYNPCC7002_A0425, found in Picosynechococcus sp. (strain ATCC 27264 / PCC 7002 / PR-6) (Agmenellum quadruplicatum).